The chain runs to 439 residues: MATSVSTIGAANKAPLSLNNSVAGTSVPSTAFFGKTLKKVYGKGVSSPKVTNRSLRIAAEEKDADPKKQTYSDRWKGLVQDFSDDQQDIARGKGMVDSLFQAPTGTGTHHAVLQSYEYVSQGLRQYNMDNTLDGFYIAPSFMDKLVVHITKNFLKLPNIKVPLILGVWGGKGQGKSFQCELVFRKMGINPIMMSAGELESGNAGEPAKLIRQRYREAAEIIRKGNICCLFINDLDAGAGRMGGTTQYTVNNQMVNATLMNIADNPTNVQLPGMYNKQENARVPIIVTGNDFSTLYAPLIRDGRMEKFYWAPTREDRIGVCKGIFRTDNVPEEAVIKIVDTFPGQSIDFFGALRARVYDDEVRKWVSGTGIEAIGDKLLNSFDGPPTFEQPKMTVEKLLEYGNMLVQEQENVKRVQLAETYLKEAALGDANADAINTGNF.

A chloroplast-targeting transit peptide spans 1 to 58 (MATSVSTIGAANKAPLSLNNSVAGTSVPSTAFFGKTLKKVYGKGVSSPKVTNRSLRIA). Residue 169–176 (GGKGQGKS) participates in ATP binding.

Belongs to the RuBisCO activase family.

The protein localises to the plastid. It localises to the chloroplast stroma. Functionally, activation of RuBisCO (ribulose-1,5-bisphosphate carboxylase/oxygenase; EC 4.1.1.39) involves the ATP-dependent carboxylation of the epsilon-amino group of lysine leading to a carbamate structure. In Nicotiana tabacum (Common tobacco), this protein is Ribulose bisphosphate carboxylase/oxygenase activase 2, chloroplastic (RCA).